The primary structure comprises 302 residues: 3-methyl-2-oxobutanoate hydroxymethyltransferase 1 (302 aa).

2 residues coordinate Mg(2+): Asp75 and Asp118. 3-methyl-2-oxobutanoate contacts are provided by residues 75-76 (DS), Asp118, and Lys147. Residue Glu149 participates in Mg(2+) binding. Catalysis depends on Glu217, which acts as the Proton acceptor.

It belongs to the PanB family. Homodecamer; pentamer of dimers. Requires Mg(2+) as cofactor.

The protein resides in the cytoplasm. The enzyme catalyses 3-methyl-2-oxobutanoate + (6R)-5,10-methylene-5,6,7,8-tetrahydrofolate + H2O = 2-dehydropantoate + (6S)-5,6,7,8-tetrahydrofolate. The protein operates within cofactor biosynthesis; (R)-pantothenate biosynthesis; (R)-pantoate from 3-methyl-2-oxobutanoate: step 1/2. Its function is as follows. Catalyzes the reversible reaction in which hydroxymethyl group from 5,10-methylenetetrahydrofolate is transferred onto alpha-ketoisovalerate to form ketopantoate. The protein is 3-methyl-2-oxobutanoate hydroxymethyltransferase 1 of Zymomonas mobilis subsp. mobilis (strain ATCC 31821 / ZM4 / CP4).